Here is a 211-residue protein sequence, read N- to C-terminus: Thiamine-phosphate synthase (211 aa).

4-amino-2-methyl-5-(diphosphooxymethyl)pyrimidine-binding positions include 36–40 and asparagine 68; that span reads QLREK. Mg(2+) is bound by residues aspartate 69 and aspartate 88. Serine 107 serves as a coordination point for 4-amino-2-methyl-5-(diphosphooxymethyl)pyrimidine. 133-135 lines the 2-[(2R,5Z)-2-carboxy-4-methylthiazol-5(2H)-ylidene]ethyl phosphate pocket; sequence TGS. A 4-amino-2-methyl-5-(diphosphooxymethyl)pyrimidine-binding site is contributed by lysine 136. 2-[(2R,5Z)-2-carboxy-4-methylthiazol-5(2H)-ylidene]ethyl phosphate contacts are provided by residues glycine 167 and 187 to 188; that span reads IT.

The protein belongs to the thiamine-phosphate synthase family. It depends on Mg(2+) as a cofactor.

It catalyses the reaction 2-[(2R,5Z)-2-carboxy-4-methylthiazol-5(2H)-ylidene]ethyl phosphate + 4-amino-2-methyl-5-(diphosphooxymethyl)pyrimidine + 2 H(+) = thiamine phosphate + CO2 + diphosphate. It carries out the reaction 2-(2-carboxy-4-methylthiazol-5-yl)ethyl phosphate + 4-amino-2-methyl-5-(diphosphooxymethyl)pyrimidine + 2 H(+) = thiamine phosphate + CO2 + diphosphate. The enzyme catalyses 4-methyl-5-(2-phosphooxyethyl)-thiazole + 4-amino-2-methyl-5-(diphosphooxymethyl)pyrimidine + H(+) = thiamine phosphate + diphosphate. It functions in the pathway cofactor biosynthesis; thiamine diphosphate biosynthesis; thiamine phosphate from 4-amino-2-methyl-5-diphosphomethylpyrimidine and 4-methyl-5-(2-phosphoethyl)-thiazole: step 1/1. Condenses 4-methyl-5-(beta-hydroxyethyl)thiazole monophosphate (THZ-P) and 2-methyl-4-amino-5-hydroxymethyl pyrimidine pyrophosphate (HMP-PP) to form thiamine monophosphate (TMP). The protein is Thiamine-phosphate synthase of Haloarcula marismortui (strain ATCC 43049 / DSM 3752 / JCM 8966 / VKM B-1809) (Halobacterium marismortui).